A 1238-amino-acid polypeptide reads, in one-letter code: DNA-directed RNA polymerase subunit beta (1238 aa).

The segment at 1186–1238 (IEGREDTPPEEVYEEGYEEGFEEESEELPEDIDFEPDSFDIENDDLDLEDFDI) is disordered. The span at 1193 to 1238 (PPEEVYEEGYEEGFEEESEELPEDIDFEPDSFDIENDDLDLEDFDI) shows a compositional bias: acidic residues.

It belongs to the RNA polymerase beta chain family. The RNAP catalytic core consists of 2 alpha, 1 beta, 1 beta' and 1 omega subunit. When a sigma factor is associated with the core the holoenzyme is formed, which can initiate transcription.

It catalyses the reaction RNA(n) + a ribonucleoside 5'-triphosphate = RNA(n+1) + diphosphate. DNA-dependent RNA polymerase catalyzes the transcription of DNA into RNA using the four ribonucleoside triphosphates as substrates. The chain is DNA-directed RNA polymerase subunit beta from Thermoanaerobacter sp. (strain X514).